We begin with the raw amino-acid sequence, 224 residues long: MLTQQQLKQQAADAALEFVEQVAGPDVIIGVGTGSTADLFIDGLARFAGRIRGTVASSERSAQRLASHGLLVLDLNDVQYMPIYVDGADEIDANLHMIKGGGGALTREKIVASVAERFICIADESKLVDRLGAFPLPLEVIPMARAAVARSLAALGGEPRLREGFVTDNGNIILDVHGLSINDAPALEARVNNIPGVVTCGLFSLAGADVALLATQNGIRRLSR.

Substrate is bound by residues 33 to 36, 86 to 89, and 99 to 102; these read TGST, DGAD, and KGGG. The active-site Proton acceptor is the Glu-108. Position 126 (Lys-126) interacts with substrate.

Belongs to the ribose 5-phosphate isomerase family. In terms of assembly, homodimer.

The catalysed reaction is aldehydo-D-ribose 5-phosphate = D-ribulose 5-phosphate. Its pathway is carbohydrate degradation; pentose phosphate pathway; D-ribose 5-phosphate from D-ribulose 5-phosphate (non-oxidative stage): step 1/1. In terms of biological role, catalyzes the reversible conversion of ribose-5-phosphate to ribulose 5-phosphate. This is Ribose-5-phosphate isomerase A from Bordetella avium (strain 197N).